We begin with the raw amino-acid sequence, 138 residues long: Trypsin inhibitor DE5 alpha chain (138 aa).

C40 and C86 are oxidised to a cystine.

Belongs to the protease inhibitor I3 (leguminous Kunitz-type inhibitor) family. Heterodimer of an alpha and a beta chain linked by a disulfide bond.

Inhibition of trypsin. The sequence is that of Trypsin inhibitor DE5 alpha chain from Adenanthera pavonina (Sandal bead tree).